The primary structure comprises 425 residues: tRNA(Ile)-lysidine synthase (425 aa).

37–42 is a binding site for ATP; the sequence is SGGKDS.

It belongs to the tRNA(Ile)-lysidine synthase family.

The protein resides in the cytoplasm. The catalysed reaction is cytidine(34) in tRNA(Ile2) + L-lysine + ATP = lysidine(34) in tRNA(Ile2) + AMP + diphosphate + H(+). Ligates lysine onto the cytidine present at position 34 of the AUA codon-specific tRNA(Ile) that contains the anticodon CAU, in an ATP-dependent manner. Cytidine is converted to lysidine, thus changing the amino acid specificity of the tRNA from methionine to isoleucine. In Leptospira borgpetersenii serovar Hardjo-bovis (strain JB197), this protein is tRNA(Ile)-lysidine synthase.